A 429-amino-acid polypeptide reads, in one-letter code: Adenosylhomocysteinase (429 aa).

Residues Thr64, Asp136, and Glu161 each coordinate substrate. NAD(+) is bound at residue 162–164 (TTT). Residues Lys191 and Asp195 each contribute to the substrate site. NAD(+) is bound by residues Asn196, 225-230 (GYGWCG), Glu248, Asn283, 304-306 (SGH), and Asn351.

This sequence belongs to the adenosylhomocysteinase family. NAD(+) is required as a cofactor.

It is found in the cytoplasm. The enzyme catalyses S-adenosyl-L-homocysteine + H2O = L-homocysteine + adenosine. It functions in the pathway amino-acid biosynthesis; L-homocysteine biosynthesis; L-homocysteine from S-adenosyl-L-homocysteine: step 1/1. In terms of biological role, may play a key role in the regulation of the intracellular concentration of adenosylhomocysteine. The protein is Adenosylhomocysteinase of Gloeothece citriformis (strain PCC 7424) (Cyanothece sp. (strain PCC 7424)).